Here is a 406-residue protein sequence, read N- to C-terminus: Phosphopentomutase (406 aa).

Residues Asp10, Asp305, His310, Asp346, His347, and His358 each contribute to the Mn(2+) site.

The protein belongs to the phosphopentomutase family. Requires Mn(2+) as cofactor.

It localises to the cytoplasm. The catalysed reaction is 2-deoxy-alpha-D-ribose 1-phosphate = 2-deoxy-D-ribose 5-phosphate. It catalyses the reaction alpha-D-ribose 1-phosphate = D-ribose 5-phosphate. It functions in the pathway carbohydrate degradation; 2-deoxy-D-ribose 1-phosphate degradation; D-glyceraldehyde 3-phosphate and acetaldehyde from 2-deoxy-alpha-D-ribose 1-phosphate: step 1/2. Functionally, isomerase that catalyzes the conversion of deoxy-ribose 1-phosphate (dRib-1-P) and ribose 1-phosphate (Rib-1-P) to deoxy-ribose 5-phosphate (dRib-5-P) and ribose 5-phosphate (Rib-5-P), respectively. The polypeptide is Phosphopentomutase (Rhizobium johnstonii (strain DSM 114642 / LMG 32736 / 3841) (Rhizobium leguminosarum bv. viciae)).